Here is a 179-residue protein sequence, read N- to C-terminus: PLGAATSNIPPQYARSTLQPTGLTSRAQSYPTNTNPGPSAKGNLVLPLNWQLLNSPASQIPTQSTTTFRSNPPLPPVVPGRRNTSPFFFPKPTRPLSFRQILDFLGRIRATKELDCKTVSEALSLNLPKFYYPLSCDDKCPPPSVCRHVGLVGFCCPPHVTDQLIWMVGLAERFKVLGG.

Polar residues-rich tracts occupy residues 1–37 and 60–70; these read PLGA…TNPG and IPTQSTTTFRS. 2 disordered regions span residues 1-41 and 60-82; these read PLGA…PSAK and IPTQ…PGRR.

As to expression, component of the acid-soluble and acid-insoluble organic matrix of calcified shell layers (at protein level).

It is found in the secreted. This is an uncharacterized protein from Haliotis asinina (Donkey's ear abalone).